Consider the following 304-residue polypeptide: Probable 5-dehydro-4-deoxyglucarate dehydratase (304 aa).

It belongs to the DapA family.

The catalysed reaction is 5-dehydro-4-deoxy-D-glucarate + H(+) = 2,5-dioxopentanoate + CO2 + H2O. Its pathway is carbohydrate acid metabolism; D-glucarate degradation; 2,5-dioxopentanoate from D-glucarate: step 2/2. This chain is Probable 5-dehydro-4-deoxyglucarate dehydratase, found in Methylobacterium radiotolerans (strain ATCC 27329 / DSM 1819 / JCM 2831 / NBRC 15690 / NCIMB 10815 / 0-1).